The primary structure comprises 307 residues: Actin maturation protease (307 aa).

Positions Met1 to Lys34 are disordered. A compositionally biased stretch (pro residues) spans Ala9–Pro24. Residues Ser80–Gly200 form a peptidase C39-like region. The active site involves Cys88.

The protein belongs to the ACTMAP family.

The protein localises to the cytoplasm. The catalysed reaction is N-terminal N(alpha)-acetyl-L-methionyl-L-aspartyl-[protein] + H2O = N-terminal L-aspartyl-[protein] + N-acetyl-L-methionine. It catalyses the reaction N-terminal N(alpha)-acetyl-L-methionyl-L-glutamyl-[protein] + H2O = N-terminal L-glutamyl-[protein] + N-acetyl-L-methionine. The enzyme catalyses N-terminal N(alpha)-acetyl-L-cysteinyl-L-aspartyl-[protein] + H2O = N-terminal L-aspartyl-[protein] + N-acetyl-L-cysteine. It carries out the reaction N-terminal N(alpha)-acetyl-L-cysteinyl-L-glutamyl-[protein] + H2O = N-terminal L-glutamyl-[protein] + N-acetyl-L-cysteine. Actin maturation protease that specifically mediates the cleavage of immature acetylated N-terminal actin, thereby contributing to actin maturation. Cleaves N-terminal acetylated methionine of immature cytoplasmic actin after translation. Cleaves N-terminal acetylated cysteine of muscle actin after canonical removal of N-terminal methionine. This is Actin maturation protease from Danio rerio (Zebrafish).